The chain runs to 209 residues: uncharacterized protein (209 aa).

Disordered stretches follow at residues Met-1–Glu-80 and Leu-164–Glu-197. Low complexity predominate over residues Ser-178–Arg-189.

This is an uncharacterized protein from Homo sapiens (Human).